The primary structure comprises 248 residues: 5'-nucleotidase SurE (248 aa).

A divalent metal cation contacts are provided by D8, D9, S39, and N91.

Belongs to the SurE nucleotidase family. The cofactor is a divalent metal cation.

The protein resides in the cytoplasm. The enzyme catalyses a ribonucleoside 5'-phosphate + H2O = a ribonucleoside + phosphate. Nucleotidase that shows phosphatase activity on nucleoside 5'-monophosphates. This chain is 5'-nucleotidase SurE, found in Citrifermentans bemidjiense (strain ATCC BAA-1014 / DSM 16622 / JCM 12645 / Bem) (Geobacter bemidjiensis).